Reading from the N-terminus, the 105-residue chain is Large ribosomal subunit protein eL36 (105 aa).

Residues 1 to 36 are disordered; the sequence is MAQERSGIAVGLNKGHKTTPLNTPKTRISRSKGKAS. Positions 27-36 are enriched in basic residues; sequence RISRSKGKAS.

The protein belongs to the eukaryotic ribosomal protein eL36 family. Component of the large ribosomal subunit (LSU).

It localises to the cytoplasm. Functionally, component of the ribosome, a large ribonucleoprotein complex responsible for the synthesis of proteins in the cell. The small ribosomal subunit (SSU) binds messenger RNAs (mRNAs) and translates the encoded message by selecting cognate aminoacyl-transfer RNA (tRNA) molecules. The large subunit (LSU) contains the ribosomal catalytic site termed the peptidyl transferase center (PTC), which catalyzes the formation of peptide bonds, thereby polymerizing the amino acids delivered by tRNAs into a polypeptide chain. The nascent polypeptides leave the ribosome through a tunnel in the LSU and interact with protein factors that function in enzymatic processing, targeting, and the membrane insertion of nascent chains at the exit of the ribosomal tunnel. This Emericella nidulans (strain FGSC A4 / ATCC 38163 / CBS 112.46 / NRRL 194 / M139) (Aspergillus nidulans) protein is Large ribosomal subunit protein eL36.